The primary structure comprises 703 residues: Zinc finger CCCH domain-containing protein 36 (703 aa).

4 disordered regions span residues 1-42 (MAGG…DPNG), 112-176 (LQLH…MKNK), 204-242 (VSGS…AGSS), and 442-481 (HGTL…SSSQ). Over residues 9–25 (GLPAAGEAAKAGRVGVG) the composition is skewed to low complexity. Positions 112-125 (LQLHGDEKYQKKAG) are enriched in basic and acidic residues. Residues 149 to 169 (VSQSPPDSNALSSQRFGSSSP) show a composition bias toward polar residues. Residues 176–203 (KTRKRTCTFYAQGRCKNGKSCTFLHEGE) form a C3H1-type zinc finger. Positions 451-468 (TPDKDASHHKGADFDKGG) are enriched in basic and acidic residues. A compositionally biased stretch (low complexity) spans 470 to 481 (SRSTLHVSSSSQ).

This is Zinc finger CCCH domain-containing protein 36 from Oryza sativa subsp. japonica (Rice).